We begin with the raw amino-acid sequence, 167 residues long: CGG triplet repeat-binding protein 1 (167 aa).

A Phosphoserine modification is found at Ser56. The interval 65–86 is disordered; the sequence is KTHTKRKAEFEEQNVRKKQRPL. A Nuclear localization signal motif is present at residues 80–84; it reads RKKQR. Residue Ser164 is modified to Phosphoserine.

The protein resides in the nucleus. In terms of biological role, binds to nonmethylated 5'-d(CGG)(n)-3' trinucleotide repeats in the FMR1 promoter. May play a role in regulating FMR1 promoter. The protein is CGG triplet repeat-binding protein 1 (Cggbp1) of Mus musculus (Mouse).